We begin with the raw amino-acid sequence, 283 residues long: MDLLLILKAVIMGIVEGITEFLPISSTGYLILSADLMSFWTKEKADLFIVVIQLGAILAVIYEYWGRLWHALMGLITGKSEGPNALKNPRQLGLSLIVATIPVMLVGFTLADQIKEYLFNPYTVAIMLILGGLLIFYVERKQIPVIAEEAEDVSLKTALLIGLMQCLALIPGTSRSGSTIIGALWLGVSRKAAAEFSFFLGIPVIIGAGLLDLLKHKDVLSSGQDWLILGVGVLVSFVVGLLCIRWLVDWVSRRDFTIFAWLRIITGIIVLLVAWIFGYTIQG.

The next 8 helical transmembrane spans lie at L4–I24, A45–W65, Q91–A111, L118–V138, V153–T173, A194–L214, I228–V248, and I258–G278.

This sequence belongs to the UppP family.

It is found in the cell inner membrane. The enzyme catalyses di-trans,octa-cis-undecaprenyl diphosphate + H2O = di-trans,octa-cis-undecaprenyl phosphate + phosphate + H(+). In terms of biological role, catalyzes the dephosphorylation of undecaprenyl diphosphate (UPP). Confers resistance to bacitracin. In Psychrobacter sp. (strain PRwf-1), this protein is Undecaprenyl-diphosphatase.